A 438-amino-acid polypeptide reads, in one-letter code: Na(+)/H(+) antiporter NhaA (438 aa).

11 helical membrane-spanning segments follow: residues 23 to 43 (FGGIFLFLNAVLAMVVANSFV), 62 to 82 (FFIGFSLHNWIDDVLMALFFL), 104 to 124 (SFPVIAAIGGMIAPGLIYFFL), 133 to 153 (GFGIPMATDIAFALGVIMLLG), 162 to 182 (VFLITLAVADDLGAIMVIALF), 185 to 205 (TNLKFAWLLGALGVVLVLALL), 212 to 232 (SLIPYLLLGVLLWFCVHQSGI), 302 to 322 (FLAPISGYFIMPLFAFANAGV), 337 to 357 (LGVILGLCLGKPLGIFLITFI), 372 to 392 (WWHILGAGFLAGIGFTMSMFI), and 410 to 430 (IAILLGSLISGIIGALYLFLL).

This sequence belongs to the NhaA Na(+)/H(+) (TC 2.A.33) antiporter family.

The protein localises to the cell inner membrane. It carries out the reaction Na(+)(in) + 2 H(+)(out) = Na(+)(out) + 2 H(+)(in). Its function is as follows. Na(+)/H(+) antiporter that extrudes sodium in exchange for external protons. The polypeptide is Na(+)/H(+) antiporter NhaA (Helicobacter acinonychis (strain Sheeba)).